We begin with the raw amino-acid sequence, 480 residues long: Probable glycosyltransferase At5g25310 (480 aa).

Residues 1–10 (MDKFQSKFTR) lie on the Cytoplasmic side of the membrane. The chain crosses the membrane as a helical; Signal-anchor for type II membrane protein span at residues 11–31 (FGFISICFGSIALVLLISHCS). The Lumenal segment spans residues 32-480 (TSFFDYSFQK…WLRRLNLKLT (449 aa)). N-linked (GlcNAc...) asparagine glycans are attached at residues N85, N120, N243, N271, and N281.

It belongs to the glycosyltransferase 47 family.

It localises to the golgi apparatus membrane. Its function is as follows. May be involved in cell wall biosynthesis. The polypeptide is Probable glycosyltransferase At5g25310 (Arabidopsis thaliana (Mouse-ear cress)).